The chain runs to 63 residues: Large ribosomal subunit protein bL32 (63 aa).

The protein belongs to the bacterial ribosomal protein bL32 family.

This chain is Large ribosomal subunit protein bL32, found in Lactobacillus delbrueckii subsp. bulgaricus (strain ATCC 11842 / DSM 20081 / BCRC 10696 / JCM 1002 / NBRC 13953 / NCIMB 11778 / NCTC 12712 / WDCM 00102 / Lb 14).